The sequence spans 205 residues: Holliday junction branch migration complex subunit RuvA (205 aa).

Residues 1-62 (MFEYVTGYVE…EDIMALYGFK (62 aa)) form a domain I region. The interval 63-141 (TREERLLFTK…DVVPDAFVDL (79 aa)) is domain II. The segment at 142 to 152 (FSDTESFDTKK) is flexible linker. The segment at 153 to 205 (GSSVELDEALEALRALGYAEREVSRVVPELLKESLTTDQYIKKALSLLLNGKR) is domain III.

It belongs to the RuvA family. Homotetramer. Forms an RuvA(8)-RuvB(12)-Holliday junction (HJ) complex. HJ DNA is sandwiched between 2 RuvA tetramers; dsDNA enters through RuvA and exits via RuvB. An RuvB hexamer assembles on each DNA strand where it exits the tetramer. Each RuvB hexamer is contacted by two RuvA subunits (via domain III) on 2 adjacent RuvB subunits; this complex drives branch migration. In the full resolvosome a probable DNA-RuvA(4)-RuvB(12)-RuvC(2) complex forms which resolves the HJ.

It is found in the cytoplasm. Functionally, the RuvA-RuvB-RuvC complex processes Holliday junction (HJ) DNA during genetic recombination and DNA repair, while the RuvA-RuvB complex plays an important role in the rescue of blocked DNA replication forks via replication fork reversal (RFR). RuvA specifically binds to HJ cruciform DNA, conferring on it an open structure. The RuvB hexamer acts as an ATP-dependent pump, pulling dsDNA into and through the RuvAB complex. HJ branch migration allows RuvC to scan DNA until it finds its consensus sequence, where it cleaves and resolves the cruciform DNA. This chain is Holliday junction branch migration complex subunit RuvA, found in Bacillus mycoides (strain KBAB4) (Bacillus weihenstephanensis).